The chain runs to 82 residues: Turripeptide OL139 (82 aa).

Residues 58 to 82 are disordered; it reads HRTTRDTADKTHGGSQRDRFFQSIA.

Contains 6 disulfide bonds. Expressed by the venom duct.

Its subcellular location is the secreted. Acts as a neurotoxin by inhibiting an ion channel. The protein is Turripeptide OL139 of Iotyrris olangoensis (Sea snail).